The primary structure comprises 677 residues: Fidgetin-like protein 1 (677 aa).

A compositionally biased stretch (polar residues) spans 203–216 (TSSAPSGESTTATF). Disordered regions lie at residues 203–232 (TSSA…PQSF), 249–324 (VPSG…SFNG), and 337–378 (GIFG…TDDR). Residue Lys226 forms a Glycyl lysine isopeptide (Lys-Gly) (interchain with G-Cter in SUMO2) linkage. Over residues 264–280 (DSDTINMLSNPTLNKAP) the composition is skewed to polar residues. The segment covering 281 to 292 (SKTEDSGQREDN) has biased composition (basic and acidic residues). At Lys341 the chain carries N6-acetyllysine. Polar residues predominate over residues 347–358 (SNKQDGSEQNGN). ATP contacts are provided by residues Ala407 and 447-452 (GTGKTL).

It belongs to the AAA ATPase family. As to quaternary structure, hexamer. Interacts (via N-terminal one-half region) with RAD51; the interaction is direct. Interacts (via N-terminal one-half region) with SPIDR (via the C-terminal region); the interaction is direct. Interacts with FIRRM; may regulate homologous recombination. The cofactor is Mg(2+).

It is found in the nucleus. Its subcellular location is the cytoplasm. The protein localises to the perinuclear region. It carries out the reaction ATP + H2O = ADP + phosphate + H(+). Involved in DNA double-strand break (DBS) repair via homologous recombination (HR). Recruited at DSB sites independently of BRCA2, RAD51 and RAD51 paralogs in a H2AX-dependent manner. May regulate osteoblast proliferation and differentiation. May play a role in the control of male meiosis dynamic. The chain is Fidgetin-like protein 1 (Fignl1) from Rattus norvegicus (Rat).